The following is an 859-amino-acid chain: Protein EFR3 homolog (859 aa).

Disordered stretches follow at residues Asp638–Thr657 and Arg697–Tyr724. Positions Trp704–Asp722 are enriched in basic and acidic residues.

Belongs to the EFR3 family.

The protein is Protein EFR3 homolog of Caenorhabditis briggsae.